The sequence spans 94 residues: MSGTVAQPEGITNPPIDELLEATDSKYSLVIYAAKRARQINAYYSQLGEGLLEYVGPLVETTSAQEKPLSIALREINSGLLTHETITDPLPPIS.

Belongs to the RNA polymerase subunit omega family. The RNAP catalytic core consists of 2 alpha, 1 beta, 1 beta' and 1 omega subunit. When a sigma factor is associated with the core the holoenzyme is formed, which can initiate transcription.

The catalysed reaction is RNA(n) + a ribonucleoside 5'-triphosphate = RNA(n+1) + diphosphate. Its function is as follows. Promotes RNA polymerase assembly. Latches the N- and C-terminal regions of the beta' subunit thereby facilitating its interaction with the beta and alpha subunits. The protein is DNA-directed RNA polymerase subunit omega of Parafrankia sp. (strain EAN1pec).